Here is a 268-residue protein sequence, read N- to C-terminus: MLNTGLRKGLALSPITHLLKRCSSVTDNVHRVNYCYNYHTVPNLSQRNLLPLFSPEALDIAWDQHQRQVVKELNDRVKGTELEDSSVFNIIFQTAALPEHAATFQFASQAYNNHFFFQSLIGKRAADAKKNSKYEANAAINKAVNENFGSKENLLSKIHELASNSFGACWLWIVIDDYNRLNLLRTFQAGSPYLWTRWQSNDPHLISSVPDYSARPRKYAHVPILNLCLWNHAYYKDYGLLNRSRYIDTWFDCIDWSVIEERLTNSLV.

The transit peptide at 1–23 (MLNTGLRKGLALSPITHLLKRCS) directs the protein to the mitochondrion.

Belongs to the mitochondrion-specific ribosomal protein mS43 family. In terms of assembly, component of the mitochondrial small ribosomal subunit (mt-SSU). Mature yeast 74S mitochondrial ribosomes consist of a small (37S) and a large (54S) subunit. The 37S small subunit contains a 15S ribosomal RNA (15S mt-rRNA) and at least 32 different proteins. The 54S large subunit contains a 21S rRNA (21S mt-rRNA) and at least 45 different proteins. mS43 forms a dimer with mS42, building a large protuberance adjacent to the mRNA channel exit in the mt-SSU body.

The protein localises to the mitochondrion. In terms of biological role, component of the mitochondrial ribosome (mitoribosome), a dedicated translation machinery responsible for the synthesis of mitochondrial genome-encoded proteins, including at least some of the essential transmembrane subunits of the mitochondrial respiratory chain. The mitoribosomes are attached to the mitochondrial inner membrane and translation products are cotranslationally integrated into the membrane. The sequence is that of Small ribosomal subunit protein mS43 from Schizosaccharomyces pombe (strain 972 / ATCC 24843) (Fission yeast).